Reading from the N-terminus, the 183-residue chain is Gamma-crystallin N-A (183 aa).

4 Beta/gamma crystallin 'Greek key' domains span residues 6-46 (GKIV…RVES), 47-89 (GAWV…KPIK), 95-136 (YRME…KVYG), and 138-180 (GAWA…RRVV).

It belongs to the beta/gamma-crystallin family. In terms of assembly, monomer.

Crystallins are the dominant structural components of the vertebrate eye lens. The sequence is that of Gamma-crystallin N-A (crygna) from Danio rerio (Zebrafish).